Consider the following 393-residue polypeptide: tRNA(Met) cytidine acetate ligase (393 aa).

ATP is bound by residues Gly81, Asn142, and Arg167.

It belongs to the TmcAL family.

It is found in the cytoplasm. It carries out the reaction cytidine(34) in elongator tRNA(Met) + acetate + ATP = N(4)-acetylcytidine(34) in elongator tRNA(Met) + AMP + diphosphate. Functionally, catalyzes the formation of N(4)-acetylcytidine (ac(4)C) at the wobble position of elongator tRNA(Met), using acetate and ATP as substrates. First activates an acetate ion to form acetyladenylate (Ac-AMP) and then transfers the acetyl group to tRNA to form ac(4)C34. This Bacillus cytotoxicus (strain DSM 22905 / CIP 110041 / 391-98 / NVH 391-98) protein is tRNA(Met) cytidine acetate ligase.